A 145-amino-acid polypeptide reads, in one-letter code: MKGLLQRVRSARVEVGTEVVGAIEQGILVLVGIEPQDTRASADKLLHKLLNYRVFSDVEGKMNLSLREVGGGLLLVSQFTLAADTKSGLRAGFSKAAPPALGAELFDYLLSQARIAHPTVAAGQFGADMQVHLINDGPVTFLFDT.

The short motif at 137 to 138 is the Gly-cisPro motif, important for rejection of L-amino acids element; sequence GP.

Belongs to the DTD family. As to quaternary structure, homodimer.

Its subcellular location is the cytoplasm. It carries out the reaction glycyl-tRNA(Ala) + H2O = tRNA(Ala) + glycine + H(+). The catalysed reaction is a D-aminoacyl-tRNA + H2O = a tRNA + a D-alpha-amino acid + H(+). An aminoacyl-tRNA editing enzyme that deacylates mischarged D-aminoacyl-tRNAs. Also deacylates mischarged glycyl-tRNA(Ala), protecting cells against glycine mischarging by AlaRS. Acts via tRNA-based rather than protein-based catalysis; rejects L-amino acids rather than detecting D-amino acids in the active site. By recycling D-aminoacyl-tRNA to D-amino acids and free tRNA molecules, this enzyme counteracts the toxicity associated with the formation of D-aminoacyl-tRNA entities in vivo and helps enforce protein L-homochirality. This Pseudomonas syringae pv. syringae (strain B728a) protein is D-aminoacyl-tRNA deacylase.